The primary structure comprises 157 residues: Transcriptional repressor NrdR (157 aa).

Residues 3–34 (CPSCQNTDSRVLESRSADAGKCVRRRRECLNC) fold into a zinc finger. The region spanning 49–139 (VTVIKRSNAK…VYRQFNGIED (91 aa)) is the ATP-cone domain.

This sequence belongs to the NrdR family. The cofactor is Zn(2+).

Functionally, negatively regulates transcription of bacterial ribonucleotide reductase nrd genes and operons by binding to NrdR-boxes. In Prochlorococcus marinus (strain SARG / CCMP1375 / SS120), this protein is Transcriptional repressor NrdR.